Here is a 429-residue protein sequence, read N- to C-terminus: 3-phosphoshikimate 1-carboxyvinyltransferase (429 aa).

3-phosphoshikimate is bound by residues lysine 22, serine 23, and arginine 27. Lysine 22 contributes to the phosphoenolpyruvate binding site. Phosphoenolpyruvate-binding residues include glycine 94 and arginine 122. The 3-phosphoshikimate site is built by serine 167, glutamine 169, aspartate 315, and lysine 342. Glutamine 169 provides a ligand contact to phosphoenolpyruvate. Catalysis depends on aspartate 315, which acts as the Proton acceptor. The phosphoenolpyruvate site is built by arginine 346 and arginine 388.

Belongs to the EPSP synthase family. As to quaternary structure, monomer.

The protein resides in the cytoplasm. It carries out the reaction 3-phosphoshikimate + phosphoenolpyruvate = 5-O-(1-carboxyvinyl)-3-phosphoshikimate + phosphate. Its pathway is metabolic intermediate biosynthesis; chorismate biosynthesis; chorismate from D-erythrose 4-phosphate and phosphoenolpyruvate: step 6/7. Functionally, catalyzes the transfer of the enolpyruvyl moiety of phosphoenolpyruvate (PEP) to the 5-hydroxyl of shikimate-3-phosphate (S3P) to produce enolpyruvyl shikimate-3-phosphate and inorganic phosphate. The polypeptide is 3-phosphoshikimate 1-carboxyvinyltransferase (Citrifermentans bemidjiense (strain ATCC BAA-1014 / DSM 16622 / JCM 12645 / Bem) (Geobacter bemidjiensis)).